The chain runs to 220 residues: Probable nicotinate-nucleotide adenylyltransferase (220 aa).

The protein belongs to the NadD family.

The catalysed reaction is nicotinate beta-D-ribonucleotide + ATP + H(+) = deamido-NAD(+) + diphosphate. The protein operates within cofactor biosynthesis; NAD(+) biosynthesis; deamido-NAD(+) from nicotinate D-ribonucleotide: step 1/1. In terms of biological role, catalyzes the reversible adenylation of nicotinate mononucleotide (NaMN) to nicotinic acid adenine dinucleotide (NaAD). The sequence is that of Probable nicotinate-nucleotide adenylyltransferase from Laribacter hongkongensis (strain HLHK9).